A 92-amino-acid chain; its full sequence is Bombyxin A-9 (92 aa).

A signal peptide spans 1 to 19 (MKLLLAIALMLTTVMWAST). A Pyrrolidone carboxylic acid modification is found at Gln20. 3 cysteine pairs are disulfide-bonded: Cys29-Cys79, Cys41-Cys92, and Cys78-Cys83. The propeptide at 50–71 (SDAQFASYGSAWLMPYSEGRDQ) is c peptide like.

Belongs to the insulin family. As to quaternary structure, heterodimer of a B chain and an A chain linked by two disulfide bonds.

The protein resides in the secreted. Brain peptide responsible for activation of prothoracic glands to produce ecdysone in insects. The polypeptide is Bombyxin A-9 (BBXA9) (Bombyx mori (Silk moth)).